The following is a 1306-amino-acid chain: Putative late blight resistance protein homolog R1A-10 (1306 aa).

2 coiled-coil regions span residues 407–428 and 520–542; these read SDSL…ESLQ and PRMK…KLLS. Residues 521–808 enclose the NB-ARC domain; that stretch reads RMKEEIVGFE…SEAFIKSSEG (288 aa). 554-561 serves as a coordination point for ATP; sequence GMPGLGKT. LRR repeat units lie at residues 858–881, 921–935, 936–961, 979–1007, 1010–1035, 1057–1081, 1082–1106, 1110–1129, 1130–1153, 1156–1181, and 1216–1240; these read AEEN…VYSH, LSSL…ILPN, FKFL…PYLR, LWNL…VWDM, LRHL…NLDD, TPNL…ALNF, PIRL…ISAP, YLKL…TADH, LKNL…KVSN, FPQL…AFPN, and ESVV…NFKL. Positions 1240-1306 constitute an HMA domain; that stretch reads LVLIEKWPKF…KLRKCGMPGL (67 aa).

The protein belongs to the disease resistance NB-LRR family.

It localises to the cytoplasm. Its subcellular location is the membrane. Confers resistance to late blight (Phytophthora infestans) races carrying the avirulence gene Avr1. Resistance proteins guard the plant against pathogens that contain an appropriate avirulence protein via an indirect interaction with this avirulence protein. That triggers a defense system including the hypersensitive response, which restricts the pathogen growth. The chain is Putative late blight resistance protein homolog R1A-10 (R1A-10) from Solanum demissum (Wild potato).